Reading from the N-terminus, the 772-residue chain is NAD(P)H-quinone oxidoreductase subunit 5, chloroplastic (772 aa).

16 consecutive transmembrane segments (helical) span residues 9–29, 40–60, 89–109, 125–145, 147–167, 185–205, 220–240, 259–279, 290–312, 328–348, 355–375, 397–417, 426–446, 550–570, 604–624, and 731–751; these read WIIP…LLLF, WSFP…YLSI, IDPL…LVLF, FAYL…SNLI, IYIF…FWFT, GDFG…SFEF, NQVH…GAVA, TPIS…FLVA, YIMN…LALA, LGYM…FHLI, ALLF…VGYS, TAFL…CFWS, WLYS…TAFY, LFSL…GIPF, FVTN…IATF, and IFIF…FFVL.

It belongs to the complex I subunit 5 family. In terms of assembly, NDH is composed of at least 16 different subunits, 5 of which are encoded in the nucleus.

The protein localises to the plastid. The protein resides in the chloroplast thylakoid membrane. It carries out the reaction a plastoquinone + NADH + (n+1) H(+)(in) = a plastoquinol + NAD(+) + n H(+)(out). The enzyme catalyses a plastoquinone + NADPH + (n+1) H(+)(in) = a plastoquinol + NADP(+) + n H(+)(out). NDH shuttles electrons from NAD(P)H:plastoquinone, via FMN and iron-sulfur (Fe-S) centers, to quinones in the photosynthetic chain and possibly in a chloroplast respiratory chain. The immediate electron acceptor for the enzyme in this species is believed to be plastoquinone. Couples the redox reaction to proton translocation, and thus conserves the redox energy in a proton gradient. This Oenothera argillicola (Appalachian evening primrose) protein is NAD(P)H-quinone oxidoreductase subunit 5, chloroplastic (ndhF).